Reading from the N-terminus, the 354-residue chain is 3'-5' exonuclease (354 aa).

The tract at residues methionine 1–lysine 120 is disordered. Composition is skewed to basic and acidic residues over residues lysine 13–valine 23, threonine 36–alanine 50, and lysine 71–proline 91. Phosphoserine is present on residues serine 104, serine 110, and serine 112. The 3'-5' exonuclease domain maps to valine 146–arginine 314. Residues aspartate 163, glutamate 165, and aspartate 301 each contribute to the Mg(2+) site.

Belongs to the WRNexo family.

It localises to the nucleus. Has exonuclease activity on both single-stranded and duplex templates bearing overhangs, but not blunt ended duplex DNA, and cleaves in a 3'-5' direction. Essential for the formation of DNA replication focal centers. Has an important role in maintaining genome stability. This Drosophila erecta (Fruit fly) protein is 3'-5' exonuclease.